An 89-amino-acid chain; its full sequence is Large ribosomal subunit protein bL27 (89 aa).

The segment at methionine 1–arginine 20 is disordered.

The protein belongs to the bacterial ribosomal protein bL27 family.

This chain is Large ribosomal subunit protein bL27, found in Rhizorhabdus wittichii (strain DSM 6014 / CCUG 31198 / JCM 15750 / NBRC 105917 / EY 4224 / RW1) (Sphingomonas wittichii).